Consider the following 146-residue polypeptide: Large ribosomal subunit protein uL15 (146 aa).

Over residues 1–13 (MKLHELKPAEGSR) the composition is skewed to basic and acidic residues. Residues 1-57 (MKLHELKPAEGSRKVRNRVGRGTSSGNGKTSGRGQKGQKARSGVGLRPGFEGGQTPL) are disordered. Over residues 23-35 (TSSGNGKTSGRGQ) the composition is skewed to gly residues.

This sequence belongs to the universal ribosomal protein uL15 family. In terms of assembly, part of the 50S ribosomal subunit.

Its function is as follows. Binds to the 23S rRNA. This Streptococcus thermophilus (strain CNRZ 1066) protein is Large ribosomal subunit protein uL15.